A 214-amino-acid chain; its full sequence is Uridine kinase (214 aa).

Residue 15-22 (GASASGKS) participates in ATP binding.

The protein belongs to the uridine kinase family.

The protein localises to the cytoplasm. The catalysed reaction is uridine + ATP = UMP + ADP + H(+). It carries out the reaction cytidine + ATP = CMP + ADP + H(+). Its pathway is pyrimidine metabolism; CTP biosynthesis via salvage pathway; CTP from cytidine: step 1/3. The protein operates within pyrimidine metabolism; UMP biosynthesis via salvage pathway; UMP from uridine: step 1/1. This Tolumonas auensis (strain DSM 9187 / NBRC 110442 / TA 4) protein is Uridine kinase.